The chain runs to 678 residues: MKRRILITSALPYANGPIHLGHLVEYTQTDIWARYQRLRGHDCVYVCADDAHGTPIMLRAQSEGITPEELITRMHGDHLRDFTGFGIRFDLYHSTHSPENFEISQSIYRALRAADYINVREIEQAYDPVAGIFLPDRFIRGTCPRCGAADQYGDSCEVCGATYSPTDLINPVSAVSGAVPERRNSEHYFFQLGDFSDFLRRWIHSGTLQEEVAHKLDEWFSIGLSDWDISRDAPYFGIPIPDAPGKFFYVWLDALPGYMAATQHWCAAHGRNLADYWGPDSAAEIYHFIGKDIIYFHGLFWPAMLKGSGHRLPTGIFAHGHLTVNGAKMSKSRGTSITARQYLQHLNPEFLRYYIATKLNSHVEDIDLNLEDFLLRGNGDLVGKVVNLASRAAGFIHRSFAGRLAASLGKDQAFYDGLLQTQEAIGEAYAGREYGKAMRDIMALADQINAYVDQNAPWTLAKDPAQHESLHRVVTVTLNGFRVLITLLSPVLPELSRKALEFLQCELDWAGLSKPLLDHQILPYSHLLQRMEKTQVDALIQNPAESPATAPGTAAAPVPTPVPAEAREENPFIGIDDFSKVDLRIARIVAATNVDGADKLLHLTLDIGEGTRSVFAGIKSAYDPASLVGRLTVMVANLAPRKMRFGLSEGMVLAASGPEGGPFLLSPDSGAQPGMRVK.

Positions 12-22 (PYANGPIHLGH) match the 'HIGH' region motif. Zn(2+) is bound by residues Cys-143, Cys-146, Cys-156, and Cys-159. The 'KMSKS' region motif lies at 328–332 (KMSKS). Lys-331 serves as a coordination point for ATP. One can recognise a tRNA-binding domain in the interval 577-678 (DFSKVDLRIA…SGAQPGMRVK (102 aa)).

Belongs to the class-I aminoacyl-tRNA synthetase family. MetG type 1 subfamily. As to quaternary structure, homodimer. It depends on Zn(2+) as a cofactor.

The protein resides in the cytoplasm. It carries out the reaction tRNA(Met) + L-methionine + ATP = L-methionyl-tRNA(Met) + AMP + diphosphate. In terms of biological role, is required not only for elongation of protein synthesis but also for the initiation of all mRNA translation through initiator tRNA(fMet) aminoacylation. This chain is Methionine--tRNA ligase, found in Acidithiobacillus ferrooxidans (strain ATCC 23270 / DSM 14882 / CIP 104768 / NCIMB 8455) (Ferrobacillus ferrooxidans (strain ATCC 23270)).